Here is a 161-residue protein sequence, read N- to C-terminus: Large ribosomal subunit protein eL21 (161 aa).

This sequence belongs to the eukaryotic ribosomal protein eL21 family.

This is Large ribosomal subunit protein eL21 (RPL21) from Cyanophora paradoxa.